The sequence spans 343 residues: Phosphate acyltransferase (343 aa).

This sequence belongs to the PlsX family. Homodimer. Probably interacts with PlsY.

It is found in the cytoplasm. The enzyme catalyses a fatty acyl-[ACP] + phosphate = an acyl phosphate + holo-[ACP]. Its pathway is lipid metabolism; phospholipid metabolism. Functionally, catalyzes the reversible formation of acyl-phosphate (acyl-PO(4)) from acyl-[acyl-carrier-protein] (acyl-ACP). This enzyme utilizes acyl-ACP as fatty acyl donor, but not acyl-CoA. The chain is Phosphate acyltransferase from Coxiella burnetii (strain Dugway 5J108-111).